A 157-amino-acid polypeptide reads, in one-letter code: SsrA-binding protein (157 aa).

The protein belongs to the SmpB family.

It localises to the cytoplasm. Required for rescue of stalled ribosomes mediated by trans-translation. Binds to transfer-messenger RNA (tmRNA), required for stable association of tmRNA with ribosomes. tmRNA and SmpB together mimic tRNA shape, replacing the anticodon stem-loop with SmpB. tmRNA is encoded by the ssrA gene; the 2 termini fold to resemble tRNA(Ala) and it encodes a 'tag peptide', a short internal open reading frame. During trans-translation Ala-aminoacylated tmRNA acts like a tRNA, entering the A-site of stalled ribosomes, displacing the stalled mRNA. The ribosome then switches to translate the ORF on the tmRNA; the nascent peptide is terminated with the 'tag peptide' encoded by the tmRNA and targeted for degradation. The ribosome is freed to recommence translation, which seems to be the essential function of trans-translation. The polypeptide is SsrA-binding protein (Chlorobium phaeovibrioides (strain DSM 265 / 1930) (Prosthecochloris vibrioformis (strain DSM 265))).